The following is a 500-amino-acid chain: NAD(P)H-quinone oxidoreductase chain 4, chloroplastic (500 aa).

15 consecutive transmembrane segments (helical) span residues 4 to 24 (LPWL…IPLF), 31 to 51 (IIRW…TYTF), 87 to 107 (IGPI…AWPV), 111 to 131 (PRLF…LFAS), 134 to 154 (ILLF…LISM), 167 to 187 (FILY…SMGL), 207 to 227 (VVLE…KLPI), 242 to 262 (HYST…YGLI), 274 to 294 (SLFS…AALT), 305 to 325 (IAYS…SMAD), 330 to 350 (GAIL…FLAG), 358 to 378 (TLFL…STMF), 386 to 406 (LALP…GIIT), 416 to 436 (IVIA…LLSM), and 462 to 482 (IFIS…PDLV).

This sequence belongs to the complex I subunit 4 family.

The protein localises to the plastid. The protein resides in the chloroplast thylakoid membrane. It carries out the reaction a plastoquinone + NADH + (n+1) H(+)(in) = a plastoquinol + NAD(+) + n H(+)(out). The catalysed reaction is a plastoquinone + NADPH + (n+1) H(+)(in) = a plastoquinol + NADP(+) + n H(+)(out). The polypeptide is NAD(P)H-quinone oxidoreductase chain 4, chloroplastic (Cycas taitungensis (Prince sago)).